The sequence spans 227 residues: Lipoprotein-releasing system ATP-binding protein LolD (227 aa).

Residues 7-227 (LKLTGVERHY…TISDGKVVEF (221 aa)) form the ABC transporter domain. 43–50 (APSGTGKS) is an ATP binding site.

The protein belongs to the ABC transporter superfamily. Lipoprotein translocase (TC 3.A.1.125) family. As to quaternary structure, the complex is composed of two ATP-binding proteins (LolD) and two transmembrane proteins (LolC and LolE).

Its subcellular location is the cell inner membrane. Part of the ABC transporter complex LolCDE involved in the translocation of mature outer membrane-directed lipoproteins, from the inner membrane to the periplasmic chaperone, LolA. Responsible for the formation of the LolA-lipoprotein complex in an ATP-dependent manner. This chain is Lipoprotein-releasing system ATP-binding protein LolD, found in Rhizobium etli (strain ATCC 51251 / DSM 11541 / JCM 21823 / NBRC 15573 / CFN 42).